The following is a 299-amino-acid chain: GTP cyclohydrolase FolE2 (299 aa).

Belongs to the GTP cyclohydrolase IV family.

The enzyme catalyses GTP + H2O = 7,8-dihydroneopterin 3'-triphosphate + formate + H(+). The protein operates within cofactor biosynthesis; 7,8-dihydroneopterin triphosphate biosynthesis; 7,8-dihydroneopterin triphosphate from GTP: step 1/1. Its function is as follows. Converts GTP to 7,8-dihydroneopterin triphosphate. This is GTP cyclohydrolase FolE2 from Citrobacter koseri (strain ATCC BAA-895 / CDC 4225-83 / SGSC4696).